A 202-amino-acid chain; its full sequence is MKALTVRQQEVFDLIRDHISQTGMPPTRAEIAQRLGFRSPNAAEEHLKALARKGVIEIVSGASRGIRLLQEEEEGLPLVGRVAAGEPLLAQQHIEGHYQVDPSLFKPNADFLLRVSGMSMKDIGIMDGDLLAVHKTQDVRNGQVVVARIDDEVTVKRLKKQGNKVELLPENSEFKPIVVDLRQQNFTIEGLAVGVIRNGDWL.

A DNA-binding region (H-T-H motif) is located at residues 28–48 (RAEIAQRLGFRSPNAAEEHLK). Active-site for autocatalytic cleavage activity residues include S119 and K156.

Belongs to the peptidase S24 family. Homodimer.

The catalysed reaction is Hydrolysis of Ala-|-Gly bond in repressor LexA.. In terms of biological role, represses a number of genes involved in the response to DNA damage (SOS response), including recA and lexA. Binds to the 16 bp palindromic sequence 5'-CTGTATATATATACAG-3'. In the presence of single-stranded DNA, RecA interacts with LexA causing an autocatalytic cleavage which disrupts the DNA-binding part of LexA, leading to derepression of the SOS regulon and eventually DNA repair. The polypeptide is LexA repressor (Escherichia fergusonii (strain ATCC 35469 / DSM 13698 / CCUG 18766 / IAM 14443 / JCM 21226 / LMG 7866 / NBRC 102419 / NCTC 12128 / CDC 0568-73)).